Consider the following 358-residue polypeptide: uncharacterized protein (358 aa).

Residues 229 to 264 (KQLHEFKLAFDYFDQEKNGWLDYEHFELCLKSQGYN) form the EF-hand domain. The Ca(2+) site is built by aspartate 242, asparagine 246, tryptophan 248, and histidine 253.

This is an uncharacterized protein from Caenorhabditis elegans.